The following is a 526-amino-acid chain: Outer capsid protein VP5 (526 aa).

The segment at 1–42 (MGKIIKSLSRFGKKVGNALTSNTAKKIYSTIGKAAERFAESE) is involved in membrane permeabilization.

Belongs to the orbivirus VP5 family.

It is found in the virion. Its function is as follows. VP5 protein is one of the two proteins (with VP2) which constitute the virus particle outer capsid. Acts as a membrane permeabilization protein that mediates release of viral particles from endosomal compartments into the cytoplasm. Permeabilization activity is probably negatively regulated by VP2 and is triggered by endosomal degradation of VP2 and exposure to low pH. The sequence is that of Outer capsid protein VP5 (Segment-6) from Antilocapra americana (Pronghorn).